Consider the following 329-residue polypeptide: MDNNMEIDAARSPEPHHLSPTTDPGSIPTLDGWIESLMTCKQLAEEDVRRLCDRAREVLQEESNVQPVKCPVTVCGDIHGQFHDLMELFRIGGPNPDTNYLFMGDYVDRGYYSVETVTLLVCLKIRYPQRITILRGNHESRQITQVYGFYDECLRKYGNANVWKYFTDLFDYLPLTALIENQIFCLHGGLSPSIDTLDNIRSLDRIQEVPHEGPMCDLLWSDPDDRCGWGISPRGAGYTFGQDISEAFNHNNGLTLVARAHQLVMEGYNWSQDRNVVTIFSAPNYCYRCGNQAAIMEIDEHLKYTFLQFDPCPRAGEPMVSRRTPDYFL.

The tract at residues Met-1–Gly-25 is disordered. Basic and acidic residues predominate over residues Asp-8–His-17. Asp-77, His-79, Asp-105, and Asn-137 together coordinate Mn(2+). The Proton donor role is filled by His-138. Mn(2+) is bound by residues His-187 and His-261. The residue at position 329 (Leu-329) is a Leucine methyl ester.

It belongs to the PPP phosphatase family. PP-2A subfamily. Mn(2+) serves as cofactor.

It catalyses the reaction O-phospho-L-seryl-[protein] + H2O = L-seryl-[protein] + phosphate. The catalysed reaction is O-phospho-L-threonyl-[protein] + H2O = L-threonyl-[protein] + phosphate. Its function is as follows. Involved in hyphal morphogenesis. This chain is Serine/threonine-protein phosphatase PP2A catalytic subunit (pphA), found in Emericella nidulans (strain FGSC A4 / ATCC 38163 / CBS 112.46 / NRRL 194 / M139) (Aspergillus nidulans).